The following is a 432-amino-acid chain: Ornithine decarboxylase (432 aa).

K98 carries the post-translational modification N6-(pyridoxal phosphate)lysine. Pyridoxal 5'-phosphate-binding positions include S229, G266, and 296–299 (EPGR). Residue 341 to 342 (FD) participates in substrate binding. Catalysis depends on C377, which acts as the Proton donor; shared with dimeric partner. Substrate is bound at residue D378. Residue Y407 coordinates pyridoxal 5'-phosphate.

Belongs to the Orn/Lys/Arg decarboxylase class-II family. As to quaternary structure, homodimer. Only the dimer is catalytically active, as the active sites are constructed of residues from both monomers. The cofactor is pyridoxal 5'-phosphate.

Its subcellular location is the cytoplasm. It carries out the reaction L-ornithine + H(+) = putrescine + CO2. Its pathway is amine and polyamine biosynthesis; putrescine biosynthesis via L-ornithine pathway; putrescine from L-ornithine: step 1/1. Inhibited by antizyme (AZ) OAZ1 in response to polyamine levels. AZ inhibits the assembly of the functional homodimer by binding to ODC monomers and targeting them for ubiquitin-independent proteolytic destruction by the 26S proteasome. In terms of biological role, catalyzes the first and rate-limiting step of polyamine biosynthesis that converts ornithine into putrescine, which is the precursor for the polyamines, spermidine and spermine. Polyamines are essential for cell proliferation and are implicated in cellular processes, ranging from DNA replication to apoptosis. The polypeptide is Ornithine decarboxylase (spe1) (Schizosaccharomyces pombe (strain 972 / ATCC 24843) (Fission yeast)).